Here is a 44-residue protein sequence, read N- to C-terminus: Large ribosomal subunit protein bL34 (44 aa).

The disordered stretch occupies residues 21 to 44; that stretch reads RMDTSGGRRILSARRRKGRKTISA. Basic residues predominate over residues 31–44; the sequence is LSARRRKGRKTISA.

Belongs to the bacterial ribosomal protein bL34 family.

The protein is Large ribosomal subunit protein bL34 of Endomicrobium trichonymphae.